An 838-amino-acid chain; its full sequence is Major vault protein (838 aa).

8 MVP repeats span residues 13-52 (VHIL…VVPP), 53-114 (RFYC…FKLK), 118-170 (VNTG…HIIS), 171-223 (PNTA…ITLT), 224-278 (DTEA…IVLN), 280-328 (KEYC…NVVS), 329-380 (KDQA…IALD), and 381-433 (KNEG…CMSE).

In terms of assembly, the vault ribonucleoprotein particle is a huge (400 A x 670 A) cage structure of 12.9 MDa. It consists of a dimer of half-vaults, with each half-vault comprising 39 identical major vault protein (MVP) chains, PARP4 and one or more vault RNAs (vRNAs).

The protein resides in the cytoplasm. It localises to the nucleus. Required for normal vault structure. Vaults are multi-subunit structures that may act as scaffolds for proteins involved in signal transduction. Vaults may also play a role in nucleo-cytoplasmic transport. This is Major vault protein from Trypanosoma cruzi (strain CL Brener).